The chain runs to 223 residues: Putative UPF0607 protein LOC392364 (223 aa).

A compositionally biased stretch (basic and acidic residues) spans 110-138 (KMEVRAEEPKEATEVKDQVETQEQEDNKR). The disordered stretch occupies residues 110 to 223 (KMEVRAEEPK…GRTPPARQHG (114 aa)). 2 stretches are compositionally biased toward polar residues: residues 145–163 (EAASTSRPLETQGNPTSPR) and 174–186 (QLKSLTENNQTDK).

The protein belongs to the UPF0607 family.

The protein is Putative UPF0607 protein LOC392364 of Homo sapiens (Human).